The primary structure comprises 122 residues: Large ribosomal subunit protein uL14c (122 aa).

It belongs to the universal ribosomal protein uL14 family. As to quaternary structure, part of the 50S ribosomal subunit.

The protein resides in the plastid. It is found in the chloroplast. Its function is as follows. Binds to 23S rRNA. This chain is Large ribosomal subunit protein uL14c, found in Phaseolus vulgaris (Kidney bean).